We begin with the raw amino-acid sequence, 1163 residues long: Guanylate cyclase 32E (1163 aa).

Residues 1–25 form the signal peptide; it reads MPGPCASAAAFSCILVLLLLGCQRS. Over 29–469 the chain is Extracellular; sequence AAGATVSSMR…LCPRKKLDWR (441 aa). Asparagine 147, asparagine 206, asparagine 368, and asparagine 390 each carry an N-linked (GlcNAc...) asparagine glycan. A helical transmembrane segment spans residues 470-490; that stretch reads YLVSGPLCALVVVVAIALLIK. The Cytoplasmic portion of the chain corresponds to 491 to 1163; it reads HYRYEQTLAG…RSAPSITFRL (673 aa). One can recognise a Protein kinase domain in the interval 507 to 800; it reads MKDVTVINLG…IRLVRMHLKE (294 aa). Residues 873-1003 form the Guanylate cyclase domain; it reads TILFSDIVGF…DTVNTASRME (131 aa).

The protein belongs to the adenylyl cyclase class-4/guanylyl cyclase family.

Its subcellular location is the membrane. The enzyme catalyses GTP = 3',5'-cyclic GMP + diphosphate. The chain is Guanylate cyclase 32E (Gyc32E) from Drosophila melanogaster (Fruit fly).